Reading from the N-terminus, the 240-residue chain is Molybdate/tungstate import ATP-binding protein WtpC (240 aa).

Residues 2-227 (FLKVRAEKRL…KNGEVAEFLS (226 aa)) form the ABC transporter domain. Residue 31–38 (GPTGAGKS) coordinates ATP.

It belongs to the ABC transporter superfamily. Sulfate/tungstate importer (TC 3.A.1.6) family. The complex is composed of two ATP-binding proteins (WtpC), two transmembrane proteins (WtpB) and a solute-binding protein (WtpA).

The protein resides in the cell membrane. It catalyses the reaction tungstate(in) + ATP + H2O = tungstate(out) + ADP + phosphate + H(+). Part of the ABC transporter complex WtpABC involved in molybdate/tungstate import. Responsible for energy coupling to the transport system. In Archaeoglobus fulgidus (strain ATCC 49558 / DSM 4304 / JCM 9628 / NBRC 100126 / VC-16), this protein is Molybdate/tungstate import ATP-binding protein WtpC (wtpC).